Reading from the N-terminus, the 500-residue chain is Envelop protein OPG153 (500 aa).

A disulfide bridge links cysteine 43 with cysteine 342.

Belongs to the orthopoxvirus OPG153 protein family. In terms of assembly, interacts with proteins OPG094 and OPG143. Interacts with OPG154. Interacts with OPG152. Interacts with host laminin.

It is found in the virion membrane. In terms of biological role, envelop protein that mediates acid-dependent endocytosis into host cells. Plays an important role in endocytic entry of the virus by acting as an acid-sensitive membrane fusion suppressor. Low pH in host endosomes triggers conformational changes to allow de-repression of viral fusion complex activity and membrane fusion within vesicles. Also plays a role in bridging the mature virion with structural protein OPG152. This Vaccinia virus (strain Western Reserve) (VACV) protein is Envelop protein OPG153 (OPG153).